A 362-amino-acid polypeptide reads, in one-letter code: MIIDRVEVETINSFSKLELLKEVYGLISILPILTLLLGITIEVLVIVWLEREISASIQQRIGPEYAGPLGLLQAIADGTKLLFKEDILPSRGDISLFSIGPSIAVISVLLSFLVIPLGYHFVLADLSIGVFLWIAISSIAPIGLLMAGYSSNNKYSFLGGLRAAAQSISYEIPLTFCVLAISLLSNSLSTVDIVEAQSKYGFFGWNIWRQPIGFLVFLISSLAECERLPFDLPEAEEELVAGYQTEYSGIKYGLFYLVSYLNLLVSSLFVTVLYLGGWNFSIPYISFFDFFQMNKAVGILEMTMGIFITLTKAYLFLFISITIRWTLPRMRMDQLLNLGWKFLLPISLGNLLLTTSFQLVSL.

8 helical membrane passes run 29–49 (ILPI…IVWL), 103–123 (IAVI…HFVL), 128–148 (IGVF…LMAG), 164–184 (AAQS…ISLL), 202–222 (FFGW…ISSL), 247–267 (YSGI…LVSS), 303–323 (TMGI…SITI), and 342–362 (FLLP…LVSL).

It belongs to the complex I subunit 1 family. In terms of assembly, NDH is composed of at least 16 different subunits, 5 of which are encoded in the nucleus.

The protein resides in the plastid. It localises to the chloroplast thylakoid membrane. It catalyses the reaction a plastoquinone + NADH + (n+1) H(+)(in) = a plastoquinol + NAD(+) + n H(+)(out). The enzyme catalyses a plastoquinone + NADPH + (n+1) H(+)(in) = a plastoquinol + NADP(+) + n H(+)(out). In terms of biological role, NDH shuttles electrons from NAD(P)H:plastoquinone, via FMN and iron-sulfur (Fe-S) centers, to quinones in the photosynthetic chain and possibly in a chloroplast respiratory chain. The immediate electron acceptor for the enzyme in this species is believed to be plastoquinone. Couples the redox reaction to proton translocation, and thus conserves the redox energy in a proton gradient. The polypeptide is NAD(P)H-quinone oxidoreductase subunit 1, chloroplastic (Hordeum vulgare (Barley)).